We begin with the raw amino-acid sequence, 818 residues long: Beta-glucosidase (818 aa).

Asp-222 is a catalytic residue. Positions 386–538 (VFSGEMTVEY…GDAGIAEAVE (153 aa)) constitute a PA14 domain.

The protein belongs to the glycosyl hydrolase 3 family.

It is found in the cytoplasm. It catalyses the reaction Hydrolysis of terminal, non-reducing beta-D-glucosyl residues with release of beta-D-glucose.. In terms of biological role, involved in modifying a vir-inducing plant signal molecule. Hydrolyzes coniferin but not cellobiose. In Rhizobium radiobacter (Agrobacterium tumefaciens), this protein is Beta-glucosidase (cbg-1).